The sequence spans 330 residues: Malate dehydrogenase (330 aa).

Residue 15–21 coordinates NAD(+); it reads GAGGQIG. Arg-95 and Arg-101 together coordinate substrate. NAD(+) contacts are provided by residues Asn-108, Gln-115, and 132–134; that span reads VGN. The substrate site is built by Asn-134 and Arg-165. The Proton acceptor role is filled by His-190.

Belongs to the LDH/MDH superfamily. MDH type 2 family.

The enzyme catalyses (S)-malate + NAD(+) = oxaloacetate + NADH + H(+). In terms of biological role, catalyzes the reversible oxidation of malate to oxaloacetate. This Corynebacterium jeikeium (strain K411) protein is Malate dehydrogenase.